Here is a 376-residue protein sequence, read N- to C-terminus: Protein-glutamate methylesterase/protein-glutamine glutaminase 1 (376 aa).

A Response regulatory domain is found at 4-121 (KVLVVDDSSF…ARNRDEAVSL (118 aa)). Position 55 is a 4-aspartylphosphate (D55). Positions 138 to 169 (RPVASSTPVQERPQSTLNRPTTGLRREASAQA) are disordered. The segment covering 141 to 158 (ASSTPVQERPQSTLNRPT) has biased composition (polar residues). Positions 183–376 (SGKKYQLTAI…ERMLVEVGLA (194 aa)) constitute a CheB-type methylesterase domain. Catalysis depends on residues S195, H222, and D318.

Belongs to the CheB family. Post-translationally, phosphorylated by CheA. Phosphorylation of the N-terminal regulatory domain activates the methylesterase activity.

The protein resides in the cytoplasm. The catalysed reaction is [protein]-L-glutamate 5-O-methyl ester + H2O = L-glutamyl-[protein] + methanol + H(+). The enzyme catalyses L-glutaminyl-[protein] + H2O = L-glutamyl-[protein] + NH4(+). Functionally, involved in chemotaxis. Part of a chemotaxis signal transduction system that modulates chemotaxis in response to various stimuli. Catalyzes the demethylation of specific methylglutamate residues introduced into the chemoreceptors (methyl-accepting chemotaxis proteins or MCP) by CheR. Also mediates the irreversible deamidation of specific glutamine residues to glutamic acid. In Vibrio vulnificus (strain YJ016), this protein is Protein-glutamate methylesterase/protein-glutamine glutaminase 1.